Reading from the N-terminus, the 247-residue chain is Membrane-spanning 4-domains subfamily A member 6D (247 aa).

Residues 1–46 (MIPQVVTSETVTVISPNGISFPQTDKPQPSHQSQDSLKKHLKAEIK) lie on the Cytoplasmic side of the membrane. A helical transmembrane segment spans residues 47 to 67 (VMAAIQIMCAVMVLSLGIILA). Topologically, residues 68–80 (SVPSNLHFTSVFS) are extracellular. The chain crosses the membrane as a helical span at residues 81–101 (ILLESGYPFVGALFFAISGIL). Over 102 to 121 (SIVTEKKMTKPLVHSSLALS) the chain is Cytoplasmic. Residues 122-142 (ILSVLSALTGIAILSVSLAAL) traverse the membrane as a helical segment. Residues 143 to 180 (EPALQQCKLAFTQLDTTQDAYHFFSPEPLNSCFVAKAA) are Extracellular-facing. Residues 181-201 (LTGVFSLMLISSVLELGLAVL) form a helical membrane-spanning segment. The Cytoplasmic portion of the chain corresponds to 202 to 247 (TATLWWKQSSSAFSGNVIFLSQNSKNKSSVSSESLCNPTYENILTS). Serine 235 is modified (phosphoserine).

Belongs to the MS4A family. As to expression, expressed in thymus, spleen, intestine, colon, testis, heart, liver, brain, kidney, peripheral lymph node and bone marrow.

The protein localises to the membrane. In terms of biological role, may be involved in signal transduction as a component of a multimeric receptor complex. The chain is Membrane-spanning 4-domains subfamily A member 6D (Ms4a6d) from Mus musculus (Mouse).